Here is a 702-residue protein sequence, read N- to C-terminus: Elongation factor G (702 aa).

The tr-type G domain occupies 8–286; that stretch reads DKVRNIGIIA…AVVEYLPSPL (279 aa). GTP is bound by residues 17–24, 85–89, and 139–142; these read AHIDAGKT, DTPGH, and NKMD.

The protein belongs to the TRAFAC class translation factor GTPase superfamily. Classic translation factor GTPase family. EF-G/EF-2 subfamily.

The protein resides in the cytoplasm. Functionally, catalyzes the GTP-dependent ribosomal translocation step during translation elongation. During this step, the ribosome changes from the pre-translocational (PRE) to the post-translocational (POST) state as the newly formed A-site-bound peptidyl-tRNA and P-site-bound deacylated tRNA move to the P and E sites, respectively. Catalyzes the coordinated movement of the two tRNA molecules, the mRNA and conformational changes in the ribosome. This chain is Elongation factor G, found in Chloroflexus aggregans (strain MD-66 / DSM 9485).